We begin with the raw amino-acid sequence, 367 residues long: MDYRDAGVDIQAGRDFVNRIKALVQQTTRSEVLGGLGGFGGCFQLPEGYRQPVLVSGADGVGTKLKIAQALNQHHTIGIDLVAMCVNDVLTCGAEPLFFLDYLATGHLEPEALTDVIAGIAQGCQQAGCALLGGETAEMPGFYPVGEYDLAGFCVGIVEKAEMLNGSQVRMGDRAIGLASSGVHSNGYSLVRKIVDEFIGPAAREQSEAGATEALVSPWSITPWAEREDLPPVDRQQSLGAALLTPTQIYVKPVLAAQRSGLTLHGMAHITGGGLPENLPRCLGEGQSVQLDPQSWPAPPIFDWIASTGSVPTAAMFDTFNMGIGFVLIVPPDEVESALRWFNTQQCPAYGIGEVVAGAGEVLGLPG.

This sequence belongs to the AIR synthase family.

The protein resides in the cytoplasm. It catalyses the reaction 2-formamido-N(1)-(5-O-phospho-beta-D-ribosyl)acetamidine + ATP = 5-amino-1-(5-phospho-beta-D-ribosyl)imidazole + ADP + phosphate + H(+). The protein operates within purine metabolism; IMP biosynthesis via de novo pathway; 5-amino-1-(5-phospho-D-ribosyl)imidazole from N(2)-formyl-N(1)-(5-phospho-D-ribosyl)glycinamide: step 2/2. The protein is Phosphoribosylformylglycinamidine cyclo-ligase of Cyanothece sp. (strain PCC 7425 / ATCC 29141).